We begin with the raw amino-acid sequence, 197 residues long: Fucoxanthin-chlorophyll a-c binding protein D, chloroplastic (197 aa).

The transit peptide at 1-31 (MKTAVIASLIAGAAAFAPAKNAARTSVATNM) directs the protein to the chloroplast. 3 helical membrane passes run 73–94 (ISMLAVVGYLVQEAGVRLPGTI), 114–133 (PAGGLVQLLFFIGVLESSVM), and 174–196 (GRAAQMGILALMVHEQLGVSLLP).

It belongs to the fucoxanthin chlorophyll protein family. The LHC complex of chromophytic algae is composed of fucoxanthin, chlorophyll A and C bound non-covalently by fucoxanthin chlorophyll proteins (FCPs). The ratio of the pigments in LHC; fucoxanthin: chlorophyll C: chlorophyll A; (0.6-1): (0.1-0.3): (1).

It localises to the plastid. Its subcellular location is the chloroplast thylakoid membrane. Its function is as follows. The light-harvesting complex (LHC) functions as a light receptor, it captures and delivers excitation energy to photosystems with which it is closely associated. Energy is transferred from the carotenoid and chlorophyll C (or B) to chlorophyll A and the photosynthetic reaction centers where it is used to synthesize ATP and reducing power. The chain is Fucoxanthin-chlorophyll a-c binding protein D, chloroplastic (FCPD) from Phaeodactylum tricornutum (Diatom).